The following is a 285-amino-acid chain: Shikimate dehydrogenase (NADP(+)) (285 aa).

Residues 20–22 (SRS) and T67 contribute to the shikimate site. The active-site Proton acceptor is the K71. Positions 93 and 108 each coordinate shikimate. NADP(+)-binding positions include 132–136 (GAGGA) and M224. Y226 is a shikimate binding site. G248 lines the NADP(+) pocket.

The protein belongs to the shikimate dehydrogenase family. As to quaternary structure, homodimer.

It catalyses the reaction shikimate + NADP(+) = 3-dehydroshikimate + NADPH + H(+). It functions in the pathway metabolic intermediate biosynthesis; chorismate biosynthesis; chorismate from D-erythrose 4-phosphate and phosphoenolpyruvate: step 4/7. Involved in the biosynthesis of the chorismate, which leads to the biosynthesis of aromatic amino acids. Catalyzes the reversible NADPH linked reduction of 3-dehydroshikimate (DHSA) to yield shikimate (SA). This Bordetella avium (strain 197N) protein is Shikimate dehydrogenase (NADP(+)).